Reading from the N-terminus, the 482-residue chain is Anaerobic nitric oxide reductase flavorubredoxin (482 aa).

The zinc metallo-hydrolase stretch occupies residues 30-210; sequence LRGSSYNSYL…PFSRLVTPKI (181 aa). 6 residues coordinate Fe cation: His79, Glu81, Asp83, His147, Asp166, and His227. The region spanning 254 to 393 is the Flavodoxin-like domain; sequence ITIFYDTMSN…LCRQHGRDIA (140 aa). FMN-binding positions include 260-264 and 342-369; these read TMSNN and AFGSHGWSGGAVDRLSTRLQDAGFEMSL. The 52-residue stretch at 426–477 folds into the Rubredoxin-like domain; that stretch reads GPSMQCSVCQWIYDPAKGEPLQDVAPGTPWSDVPDNFLCPECSLGKDVFDVL. Residues Cys431, Cys434, Cys464, and Cys467 each contribute to the Fe cation site.

This sequence in the N-terminal section; belongs to the zinc metallo-hydrolase group 3 family. Homotetramer. Fe cation serves as cofactor. It depends on FMN as a cofactor.

The protein localises to the cytoplasm. It functions in the pathway nitrogen metabolism; nitric oxide reduction. In terms of biological role, anaerobic nitric oxide reductase; uses NADH to detoxify nitric oxide (NO), protecting several 4Fe-4S NO-sensitive enzymes. Has at least 2 reductase partners, only one of which (NorW, flavorubredoxin reductase) has been identified. NO probably binds to the di-iron center; electrons enter from the NorW at rubredoxin and are transferred sequentially to the FMN center and the di-iron center. Also able to function as an aerobic oxygen reductase. The chain is Anaerobic nitric oxide reductase flavorubredoxin from Citrobacter koseri (strain ATCC BAA-895 / CDC 4225-83 / SGSC4696).